We begin with the raw amino-acid sequence, 259 residues long: MDPPAEKPGEAGGLQITPQLLKSRTGEFSLESILLLKLRGLGLADLGCLGECLGLEWLDLSGNALTHLGPLASLRQLAVLNVSNNRLTGLEPLATCENLQSLNAAGNLLATPGQLQCLAGLPCLEYLRLRDPLARLSNPLCANPSYWAAVRELLPGLKVIDGERVIGRGSEFYQLCRDLDSSLRPSSSPGPRATEAQPWVEPGYWESWPSRSSSILEEACRQFQDTLQECWDLDRQASDSLAQAEQVLSSAGPTSSFVF.

LRR repeat units lie at residues 32–53 (SILL…GECL), 54–75 (GLEW…ASLR), 76–97 (QLAV…ATCE), and 98–119 (NLQS…QCLA). One can recognise an LRRCT domain in the interval 138–178 (NPLCANPSYWAAVRELLPGLKVIDGERVIGRGSEFYQLCRD).

The polypeptide is Leucine-rich repeat-containing protein 61 (LRRC61) (Homo sapiens (Human)).